Here is a 346-residue protein sequence, read N- to C-terminus: Biotin synthase (346 aa).

The Radical SAM core domain occupies 38–256 (QQVQVSTLLS…IAVARIMMPT (219 aa)). Residues cysteine 53, cysteine 57, and cysteine 60 each coordinate [4Fe-4S] cluster. [2Fe-2S] cluster is bound by residues cysteine 97, cysteine 128, cysteine 188, and arginine 260.

Belongs to the radical SAM superfamily. Biotin synthase family. As to quaternary structure, homodimer. [4Fe-4S] cluster serves as cofactor. It depends on [2Fe-2S] cluster as a cofactor.

It carries out the reaction (4R,5S)-dethiobiotin + (sulfur carrier)-SH + 2 reduced [2Fe-2S]-[ferredoxin] + 2 S-adenosyl-L-methionine = (sulfur carrier)-H + biotin + 2 5'-deoxyadenosine + 2 L-methionine + 2 oxidized [2Fe-2S]-[ferredoxin]. It functions in the pathway cofactor biosynthesis; biotin biosynthesis; biotin from 7,8-diaminononanoate: step 2/2. In terms of biological role, catalyzes the conversion of dethiobiotin (DTB) to biotin by the insertion of a sulfur atom into dethiobiotin via a radical-based mechanism. This chain is Biotin synthase, found in Salmonella choleraesuis (strain SC-B67).